The following is a 348-amino-acid chain: Protein RecA (348 aa).

Residue 66–73 (GPESSGKT) participates in ATP binding.

This sequence belongs to the RecA family.

Its subcellular location is the cytoplasm. Functionally, can catalyze the hydrolysis of ATP in the presence of single-stranded DNA, the ATP-dependent uptake of single-stranded DNA by duplex DNA, and the ATP-dependent hybridization of homologous single-stranded DNAs. It interacts with LexA causing its activation and leading to its autocatalytic cleavage. The sequence is that of Protein RecA from Legionella pneumophila.